Here is a 207-residue protein sequence, read N- to C-terminus: 3-demethoxyubiquinol 3-hydroxylase (207 aa).

Fe cation contacts are provided by Glu56, Glu86, His89, Glu138, Glu170, and His173.

Belongs to the COQ7 family. Fe cation is required as a cofactor.

It is found in the cell membrane. It carries out the reaction a 5-methoxy-2-methyl-3-(all-trans-polyprenyl)benzene-1,4-diol + AH2 + O2 = a 3-demethylubiquinol + A + H2O. It functions in the pathway cofactor biosynthesis; ubiquinone biosynthesis. Catalyzes the hydroxylation of 2-nonaprenyl-3-methyl-6-methoxy-1,4-benzoquinol during ubiquinone biosynthesis. This chain is 3-demethoxyubiquinol 3-hydroxylase, found in Cupriavidus pinatubonensis (strain JMP 134 / LMG 1197) (Cupriavidus necator (strain JMP 134)).